A 406-amino-acid chain; its full sequence is Pygopus homolog 2 (406 aa).

2 disordered regions span residues 1–73 (MAAS…DHLV) and 106–323 (VQGG…PQPP). Alanine 2 carries the post-translational modification N-acetylalanine. Serine 40 is subject to Phosphoserine. The short motif at 41 to 47 (PEKKRRK) is the Nuclear localization signal element. 2 stretches are compositionally biased toward pro residues: residues 131 to 141 (RQPPPFPPNPM) and 149 to 158 (PQGPGYPPPG). The span at 164 to 179 (SQPFNQPLGQNFSPPS) shows a compositional bias: polar residues. Positions 236–252 (SLPPNTSPFPGPDPGFP) are enriched in pro residues. The segment covering 285-296 (NGNQPSFPPNSS) has biased composition (polar residues). The residue at position 302 (threonine 302) is a Phosphothreonine. The PHD-type zinc-finger motif lies at 327 to 385 (VYPCGACRSEVNDDQDAILCEASCQKWFHRECTGMTESAYGLLTTEASAVWACDLCLKT).

As to quaternary structure, binds to BCL9 via the PHD-type zinc finger motif, and thereby becomes part of the nuclear beta-catenin/TCF complex.

It is found in the nucleus. Its function is as follows. Involved in signal transduction through the Wnt pathway. This Homo sapiens (Human) protein is Pygopus homolog 2 (PYGO2).